Consider the following 85-residue polypeptide: UPF0297 protein LBUL_1485 (85 aa).

The protein belongs to the UPF0297 family.

This Lactobacillus delbrueckii subsp. bulgaricus (strain ATCC BAA-365 / Lb-18) protein is UPF0297 protein LBUL_1485.